A 201-amino-acid polypeptide reads, in one-letter code: Putative lipoprotein Hmuk_2215 (201 aa).

A signal peptide spans 1–22; the sequence is MCPRPRRAVLLGLGVAMSAIAG. Position 23 is an N-acetylcysteine (cysteine 23). Cysteine 23 is lipidated: S-archaeol cysteine. Disordered regions lie at residues 25 to 78 and 182 to 201; these read ETAP…ETSE and ATRA…GDCP. Residues 69-78 show a composition bias toward basic and acidic residues; that stretch reads TRADETETSE.

The protein resides in the cell membrane. The chain is Putative lipoprotein Hmuk_2215 from Halomicrobium mukohataei (strain ATCC 700874 / DSM 12286 / JCM 9738 / NCIMB 13541) (Haloarcula mukohataei).